Consider the following 94-residue polypeptide: Small ribosomal subunit protein bS18 (94 aa).

This sequence belongs to the bacterial ribosomal protein bS18 family. In terms of assembly, part of the 30S ribosomal subunit. Forms a tight heterodimer with protein bS6.

Its function is as follows. Binds as a heterodimer with protein bS6 to the central domain of the 16S rRNA, where it helps stabilize the platform of the 30S subunit. This Albidiferax ferrireducens (strain ATCC BAA-621 / DSM 15236 / T118) (Rhodoferax ferrireducens) protein is Small ribosomal subunit protein bS18.